The primary structure comprises 393 residues: N-lysine methyltransferase KMT5A (393 aa).

The tract at residues 68-88 (PGPEMVERRGPGRPRTDGENV) is disordered. A compositionally biased stretch (basic and acidic residues) spans 72–85 (MVERRGPGRPRTDG). Position 100 is a phosphoserine (Ser-100). Residues 134-163 (RKREEKRNAGNAVRSAMKSEEQKIKDARKG) are a coiled coil. Residues 135-241 (KREEKRNAGN…SRKSKAELQS (107 aa)) form a disordered region. Basic and acidic residues predominate over residues 150–162 (MKSEEQKIKDARK). The residue at position 162 (Lys-162) is an N6-acetyllysine. At Thr-181 the chain carries Phosphothreonine. A compositionally biased stretch (basic residues) spans 197–213 (ALKKPIKGKQAPRKKAQ). In terms of domain architecture, SET spans 257-378 (EGMKIDLIDG…AGEELLYDYG (122 aa)). S-adenosyl-L-methionine is bound by residues 267–269 (KGR), Tyr-312, and 339–340 (NH).

It belongs to the class V-like SAM-binding methyltransferase superfamily. Histone-lysine methyltransferase family. PR/SET subfamily. In terms of assembly, interacts with L3MBTL1. Interacts with SIRT2 (phosphorylated form); the interaction is direct, stimulates KMT5A-mediated methyltransferase activity at histone H4 'Lys-20' (H4K20me1) and is increased in a H(2)O(2)-induced oxidative stress-dependent manner. Post-translationally, acetylated at Lys-162; does not affect methyltransferase activity. Deacetylated at Lys-162 possibly by SIRT2; does not change methyltransferase activity. Ubiquitinated and degraded by the DCX(DTL) complex.

The protein localises to the nucleus. Its subcellular location is the chromosome. The enzyme catalyses L-lysyl(20)-[histone H4] + S-adenosyl-L-methionine = N(6)-methyl-L-lysyl(20)-[histone H4] + S-adenosyl-L-homocysteine + H(+). It carries out the reaction L-lysyl-[protein] + S-adenosyl-L-methionine = N(6)-methyl-L-lysyl-[protein] + S-adenosyl-L-homocysteine + H(+). Its function is as follows. Protein-lysine N-methyltransferase that monomethylates both histones and non-histone proteins. Specifically monomethylates 'Lys-20' of histone H4 (H4K20me1). H4K20me1 is enriched during mitosis and represents a specific tag for epigenetic transcriptional repression. Mainly functions in euchromatin regions, thereby playing a central role in the silencing of euchromatic genes. Required for cell proliferation, probably by contributing to the maintenance of proper higher-order structure of DNA during mitosis. Involved in chromosome condensation and proper cytokinesis. Nucleosomes are preferred as substrate compared to free histones. Mediates monomethylation of p53/TP53 at 'Lys-382', leading to repress p53/TP53-target genes. Plays a negative role in TGF-beta response regulation and a positive role in cell migration. This is N-lysine methyltransferase KMT5A from Homo sapiens (Human).